Reading from the N-terminus, the 321-residue chain is Cysteine and histidine-rich domain-containing protein 1 (321 aa).

Zn(2+) is bound by residues cysteine 9, cysteine 14, cysteine 28, histidine 31, cysteine 46, cysteine 47, cysteine 63, histidine 68, cysteine 152, cysteine 157, cysteine 170, histidine 173, cysteine 188, cysteine 189, cysteine 205, and histidine 210. 2 CHORD domains span residues 9–68 (CYHK…RGKH) and 152–210 (CRNN…SGEH). One can recognise a CS domain in the interval 218–308 (VSKFREDWFS…KHGTGWPRLK (91 aa)).

In terms of biological role, regulates centrosome duplication. Controls the secretion of the tyrosine kinase receptor let-23/EGFR from the endoplasmic reticulum and is required for the localization of let-23/EGFR to the plasma membrane of vulval precursor cells. It thus plays a role in positively regulating let/EGFR signaling, and anchor cell and vulval precursor cell alignment. Plays a role in vulval development and morphogenesis. The chain is Cysteine and histidine-rich domain-containing protein 1 from Caenorhabditis elegans.